A 608-amino-acid chain; its full sequence is MGGLIDLNVMETEEDETQTQTPSSASGSVSPTSSSSASVSVVSSNSAGGGVCLELWHACAGPLISLPKRGSLVLYFPQGHLEQAPDFSAAIYGLPPHVFCRILDVKLHAETTTDEVYAQVSLLPESEDIERKVREGIIDVDGGEEDYEVLKRSNTPHMFCKTLTASDTSTHGGFSVPRRAAEDCFPPLDYSQPRPSQELLARDLHGLEWRFRHIYRGQPRRHLLTTGWSAFVNKKKLVSGDAVLFLRGDDGKLRLGVRRASQIEGTAALSAQYNQNMNHNNFSEVAHAISTHSVFSISYNPKASWSNFIIPAPKFLKVVDYPFCIGMRFKARVESEDASERRSPGIISGISDLDPIRWPGSKWRCLLVRWDDIVANGHQQRVSPWEIEPSGSISNSGSFVTTGPKRSRIGFSSGKPDIPVSEGIRATDFEESLRFQRVLQGQEIFPGFINTCSDGGAGARRGRFKGTEFGDSYGFHKVLQGQETVPAYSITDHRQQHGLSQRNIWCGPFQNFSTRILPPSVSSSPSSVLLTNSNSPNGRLEDHHGGSGRCRLFGFPLTDETTAVASATAVPCVEGNSMKGASAVQSNHHHSQGRDIYAMRDMLLDIAL.

Residues 1 to 40 (MGGLIDLNVMETEEDETQTQTPSSASGSVSPTSSSSASVS) form a disordered region. Residues 18–40 (QTQTPSSASGSVSPTSSSSASVS) show a composition bias toward low complexity. The segment at residues 159-261 (FCKTLTASDT…KLRLGVRRAS (103 aa)) is a DNA-binding region (TF-B3).

It belongs to the ARF family. Homo and heterodimers. In terms of tissue distribution, expressed in the whole plant.

It localises to the nucleus. In terms of biological role, auxin response factors (ARFs) are transcriptional factors that bind specifically to the DNA sequence 5'-TGTCTC-3' found in the auxin-responsive promoter elements (AuxREs). Could act as transcriptional activator or repressor. Formation of heterodimers with Aux/IAA proteins may alter their ability to modulate early auxin response genes expression. Involved in the establishment or elaboration of tissue patterning during gynoecial development. The protein is Auxin response factor 3 (ARF3) of Arabidopsis thaliana (Mouse-ear cress).